A 242-amino-acid polypeptide reads, in one-letter code: Protein fmp-52, mitochondrial (242 aa).

Residues 1–87 (MSTSTPTSTA…VISSLGTTRV (87 aa)) constitute a mitochondrion transit peptide. The disordered stretch occupies residues 33–58 (SSQVQTISRRAPANPTNSSRLSPTVN). The span at 35 to 58 (QVQTISRRAPANPTNSSRLSPTVN) shows a compositional bias: polar residues.

This sequence belongs to the FMP52 family.

The protein localises to the mitochondrion outer membrane. The sequence is that of Protein fmp-52, mitochondrial (fmp-52) from Neurospora crassa (strain ATCC 24698 / 74-OR23-1A / CBS 708.71 / DSM 1257 / FGSC 987).